Here is a 209-residue protein sequence, read N- to C-terminus: Small ribosomal subunit protein uS4 (209 aa).

The span at 1–13 (MSTKSRTRSKTRL) shows a compositional bias: basic residues. Disordered stretches follow at residues 1–20 (MSTK…LGIP) and 28–49 (YLEK…QDSD). Positions 95–160 (QRLDALVVRS…TEPFQVAAAG (66 aa)) constitute an S4 RNA-binding domain.

Belongs to the universal ribosomal protein uS4 family. In terms of assembly, part of the 30S ribosomal subunit. Contacts protein S5. The interaction surface between S4 and S5 is involved in control of translational fidelity.

Functionally, one of the primary rRNA binding proteins, it binds directly to 16S rRNA where it nucleates assembly of the body of the 30S subunit. In terms of biological role, with S5 and S12 plays an important role in translational accuracy. In Clavibacter sepedonicus (Clavibacter michiganensis subsp. sepedonicus), this protein is Small ribosomal subunit protein uS4.